Consider the following 58-residue polypeptide: Small ribosomal subunit protein bS21 (58 aa).

A compositionally biased stretch (basic and acidic residues) spans 31–42 (EIRKREHYEKPS). Positions 31-58 (EIRKREHYEKPSVKRKKKSEAARKRKYN) are disordered. Basic residues predominate over residues 43–58 (VKRKKKSEAARKRKYN).

It belongs to the bacterial ribosomal protein bS21 family.

This is Small ribosomal subunit protein bS21 from Agathobacter rectalis (strain ATCC 33656 / DSM 3377 / JCM 17463 / KCTC 5835 / VPI 0990) (Eubacterium rectale).